We begin with the raw amino-acid sequence, 247 residues long: MTALTAQVALVTGASRGIGKATALALAATGMKVVVNYAQSSTAADAVVAEIIANGGEAIAVQANVANADEVDQLIKTTLDKFSRIDVLVNNAGITRDTLLLRMKLEDWQAVIDLNLTGVFLCTKAVSKLMLKQKSGRIINITSVAGMMGNPGQANYSAAKAGVIGFTKTVAKELASRGVTVNAVAPGFIATDMTENLNAEPILQFIPLARYGQPEEVAGTIRFLATDPAAAYITGQTFNVDGGMVMF.

11–35 (VTGASRGIGKATALALAATGMKVVV) serves as a coordination point for NADP(+). Ser-143 contacts substrate. The active-site Proton acceptor is the Tyr-156.

The protein belongs to the short-chain dehydrogenases/reductases (SDR) family.

It catalyses the reaction a (3R)-hydroxyacyl-[ACP] + NADP(+) = a 3-oxoacyl-[ACP] + NADPH + H(+). The protein operates within lipid metabolism; fatty acid biosynthesis. Its function is as follows. Catalyzes the NADPH-dependent reduction of beta-ketoacyl-ACP substrates to beta-hydroxyacyl-ACP products, the first reductive step in the elongation cycle of fatty acid biosynthesis. Is capable of reducing acetoacetyl-CoA, but less well than its paralog PhaB. The polypeptide is 3-oxoacyl-[acyl-carrier-protein] reductase (fabG) (Synechocystis sp. (strain ATCC 27184 / PCC 6803 / Kazusa)).